A 371-amino-acid polypeptide reads, in one-letter code: Trans-enoyl reductase mycC (371 aa).

51–54 (CDWK) is a binding site for NADP(+). 140 to 147 (CVVGTVGL) is a substrate binding site. NADP(+)-binding positions include 182 to 185 (STAS), 205 to 208 (SPAN), Tyr223, and 270 to 271 (FE). 291–295 (GIRLL) serves as a coordination point for substrate. Residue 361 to 362 (VS) participates in NADP(+) binding.

The protein belongs to the zinc-containing alcohol dehydrogenase family. As to quaternary structure, monomer.

The enzyme catalyses L-leucine + 8 malonyl-CoA + 4 S-adenosyl-L-methionine + ATP + 9 NADPH + 12 H(+) = (5S)-5-(2-methylpropyl)-3-[(2E,6R,8E,10E,12E)-6,8,10,12-tetramethyltetradeca-2,8,10,12-tetraenoyl]-2,5-dihydro-1H-pyrrol-2-one + AMP + 4 S-adenosyl-L-homocysteine + 8 CO2 + diphosphate + 9 NADP(+) + 8 CoA + 7 H2O. Its pathway is mycotoxin biosynthesis. Functionally, trans-enoyl reductase; part of the gene cluster that mediates the biosynthesis of myceliothermophins, mycotoxins that contain a trans-fused decalin ring system connected to a conjugated 3-pyrrolin-2-one moiety and that have potential anti-tumor properties. The polyketide synthase module (PKS) of the PKS-NRPS mycA is responsible for the synthesis of the octaketide backbone. The downstream nonribosomal peptide synthetase (NRPS) module then amidates the carboxyl end of the octaketide with a leucine. A reductase-like domain (R) at the C-terminus catalyzes the reductive release of the polyketide-amino acid intermediate. Because mycA lacks a designated enoylreductase (ER) domain, the required activity is provided the enoyl reductase mycC. Following mycA-catalyzed construction and release of aminoacyl polyketide aldehyde, Knoevenagel condensation yields the expected ketone. This C18 keto acyclic precursor is the substrate of the Diels-Alderase mycB, that catalyzes the Diels-Alder cycloaddition to produce myceliothermophin E. A yet unknown oxygenase involved in the production of myceliothermophin A, via substitution with a hydroxyl group at the C21, has still to be identified. This chain is Trans-enoyl reductase mycC, found in Thermothelomyces thermophilus (strain ATCC 42464 / BCRC 31852 / DSM 1799) (Sporotrichum thermophile).